The sequence spans 228 residues: 7-cyano-7-deazaguanine synthase (228 aa).

13–23 (LSGGMDSTLSS) is an ATP binding site. Positions 192, 200, 203, and 206 each coordinate Zn(2+).

The protein belongs to the QueC family. Zn(2+) is required as a cofactor.

It catalyses the reaction 7-carboxy-7-deazaguanine + NH4(+) + ATP = 7-cyano-7-deazaguanine + ADP + phosphate + H2O + H(+). Its pathway is purine metabolism; 7-cyano-7-deazaguanine biosynthesis. In terms of biological role, catalyzes the ATP-dependent conversion of 7-carboxy-7-deazaguanine (CDG) to 7-cyano-7-deazaguanine (preQ(0)). The sequence is that of 7-cyano-7-deazaguanine synthase from Aliarcobacter butzleri (strain RM4018) (Arcobacter butzleri).